A 21-amino-acid polypeptide reads, in one-letter code: Cold shock protein CspSt (21 aa).

The 21-residue stretch at 1–21 (KNGTVKWFNAEKGFGFITSED) folds into the CSD domain.

Its subcellular location is the cytoplasm. This chain is Cold shock protein CspSt, found in Streptococcus thermophilus.